The primary structure comprises 621 residues: ATP-dependent lipid A-core flippase (621 aa).

Transmembrane regions (helical) follow at residues 32 to 52, 91 to 111, 192 to 212, 286 to 306, and 312 to 332; these read IVAA…LAAF, VWGT…LVVI, IVLL…FPLL, SPFS…IALW, and YTTI…YAPI. The ABC transmembrane type-1 domain maps to 33-344; it reads VAALIAIFGV…LANISIPMQT (312 aa). An ABC transporter domain is found at 378 to 611; it reads FRNVDVEYRS…NGYYTMLRNI (234 aa). 410–417 contributes to the ATP binding site; sequence GRSGSGKS.

The protein belongs to the ABC transporter superfamily. Lipid exporter (TC 3.A.1.106) family. In terms of assembly, homodimer.

The protein resides in the cell inner membrane. The catalysed reaction is ATP + H2O + lipid A-core oligosaccharideSide 1 = ADP + phosphate + lipid A-core oligosaccharideSide 2.. Involved in lipopolysaccharide (LPS) biosynthesis. Translocates lipid A-core from the inner to the outer leaflet of the inner membrane. Transmembrane domains (TMD) form a pore in the inner membrane and the ATP-binding domain (NBD) is responsible for energy generation. This chain is ATP-dependent lipid A-core flippase, found in Neisseria meningitidis serogroup B (strain ATCC BAA-335 / MC58).